The primary structure comprises 419 residues: 3-isopropylmalate dehydratase large subunit (419 aa).

Residues cysteine 300, cysteine 360, and cysteine 363 each coordinate [4Fe-4S] cluster.

This sequence belongs to the aconitase/IPM isomerase family. LeuC type 2 subfamily. Heterodimer of LeuC and LeuD. [4Fe-4S] cluster serves as cofactor.

The enzyme catalyses (2R,3S)-3-isopropylmalate = (2S)-2-isopropylmalate. The protein operates within amino-acid biosynthesis; L-leucine biosynthesis; L-leucine from 3-methyl-2-oxobutanoate: step 2/4. Functionally, catalyzes the isomerization between 2-isopropylmalate and 3-isopropylmalate, via the formation of 2-isopropylmaleate. This is 3-isopropylmalate dehydratase large subunit from Nitratidesulfovibrio vulgaris (strain DP4) (Desulfovibrio vulgaris).